Consider the following 741-residue polypeptide: Interleukin-17 receptor D (741 aa).

A signal peptide spans 1-26 (MAPGRELGAFLLALLAFCGGRRLAEA). Over 27 to 301 (AGGPGGRRGA…VHSPWAGPIR (275 aa)) the chain is Extracellular. 5 N-linked (GlcNAc...) asparagine glycosylation sites follow: N57, N82, N173, N208, and N279. The helical transmembrane segment at 302-322 (AIAITVPLVVISAFATLFTVM) threads the bilayer. Topologically, residues 323–741 (CRKKQQENIY…TDELQAIAPL (419 aa)) are cytoplasmic. Positions 357 to 510 (RPKVFICYSS…LMDNLPQLYS (154 aa)) constitute an SEFIR domain. Low complexity predominate over residues 688–703 (TETSSITGSVSSSSGL). A disordered region spans residues 688-708 (TETSSITGSVSSSSGLGEEEP).

Its subcellular location is the membrane. Feedback inhibitor of fibroblast growth factor mediated Ras-MAPK signaling and ERK activation. May inhibit FGF-induced FGFR1 tyrosine phosphorylation. Inhibits TGFB-induced epithelial-to-mesenchymal transition in lens epithelial cells. The sequence is that of Interleukin-17 receptor D (IL17RD) from Gallus gallus (Chicken).